We begin with the raw amino-acid sequence, 126 residues long: Histone H2B type 2-B (126 aa).

Low complexity predominate over residues 1–12; that stretch reads MPDPAKSAPAPK. The segment at 1–36 is disordered; it reads MPDPAKSAPAPKKGSKKAVTKVQKKDGKKRKRSRKE. An N-acetylproline modification is found at Pro-2. Lys-6 is modified (N6-(2-hydroxyisobutyryl)lysine; alternate). The residue at position 6 (Lys-6) is an N6-(beta-hydroxybutyryl)lysine; alternate. Lys-6 is modified (N6-acetyllysine; alternate). Position 6 is an N6-butyryllysine; alternate (Lys-6). Residue Lys-6 is modified to N6-crotonyllysine; alternate. Lys-6 is subject to N6-lactoyllysine; alternate. Lys-6 participates in a covalent cross-link: Glycyl lysine isopeptide (Lys-Gly) (interchain with G-Cter in SUMO2); alternate. Ser-7 carries the ADP-ribosylserine modification. N6-(beta-hydroxybutyryl)lysine; alternate is present on Lys-12. N6-acetyllysine; alternate is present on residues Lys-12 and Lys-13. N6-crotonyllysine; alternate is present on residues Lys-12 and Lys-13. The residue at position 12 (Lys-12) is an N6-lactoyllysine; alternate. N6-(2-hydroxyisobutyryl)lysine; alternate is present on Lys-13. Residue Ser-15 is modified to Phosphoserine; by STK4/MST1. An N6-acetyllysine; alternate mark is found at Lys-16, Lys-17, Lys-21, and Lys-24. An N6-crotonyllysine; alternate mark is found at Lys-16, Lys-17, Lys-21, and Lys-24. An N6-lactoyllysine; alternate mark is found at Lys-16, Lys-17, Lys-21, and Lys-24. At Lys-17 the chain carries N6-glutaryllysine; alternate. Lys-21 and Lys-24 each carry N6-(2-hydroxyisobutyryl)lysine; alternate. N6-(beta-hydroxybutyryl)lysine; alternate is present on Lys-21. At Lys-21 the chain carries N6-butyryllysine; alternate. A Glycyl lysine isopeptide (Lys-Gly) (interchain with G-Cter in SUMO2); alternate cross-link involves residue Lys-21. Lys-25 bears the N6-(2-hydroxyisobutyryl)lysine mark. N6-(2-hydroxyisobutyryl)lysine; alternate is present on Lys-35. N6-(beta-hydroxybutyryl)lysine; alternate is present on Lys-35. Lys-35 bears the N6-crotonyllysine; alternate mark. Position 35 is an N6-glutaryllysine; alternate (Lys-35). Residue Lys-35 is modified to N6-succinyllysine; alternate. Lys-35 participates in a covalent cross-link: Glycyl lysine isopeptide (Lys-Gly) (interchain with G-Cter in ubiquitin); alternate. PolyADP-ribosyl glutamic acid is present on Glu-36. Ser-37 bears the Phosphoserine; by AMPK mark. N6-(2-hydroxyisobutyryl)lysine; alternate occurs at positions 44, 47, and 58. Lys-44 carries the post-translational modification N6-lactoyllysine; alternate. Residues Lys-44 and Lys-47 each carry the N6-glutaryllysine; alternate modification. Residue Lys-47 is modified to N6-methyllysine; alternate. Lys-58 bears the N6,N6-dimethyllysine; alternate mark. A Dimethylated arginine modification is found at Arg-80. Lys-86 carries the post-translational modification N6-(2-hydroxyisobutyryl)lysine; alternate. Lys-86 bears the N6-acetyllysine; alternate mark. An N6-lactoyllysine; alternate modification is found at Lys-86. Lys-86 is modified (N6,N6,N6-trimethyllysine; alternate). 2 positions are modified to omega-N-methylarginine: Arg-87 and Arg-93. Position 109 is an N6-(2-hydroxyisobutyryl)lysine; alternate (Lys-109). An N6-(beta-hydroxybutyryl)lysine; alternate modification is found at Lys-109. Lys-109 carries the post-translational modification N6-lactoyllysine; alternate. Lys-109 carries the N6-glutaryllysine; alternate modification. The residue at position 109 (Lys-109) is an N6-methyllysine; alternate. The O-linked (GlcNAc) serine glycan is linked to Ser-113. Thr-116 is subject to Phosphothreonine. N6-(2-hydroxyisobutyryl)lysine; alternate is present on residues Lys-117 and Lys-121. The residue at position 117 (Lys-117) is an N6-(beta-hydroxybutyryl)lysine; alternate. N6-lactoyllysine; alternate is present on residues Lys-117 and Lys-121. N6-glutaryllysine; alternate is present on residues Lys-117 and Lys-121. Residues Lys-117 and Lys-121 each carry the N6-succinyllysine; alternate modification. At Lys-117 the chain carries N6-methylated lysine; alternate. Residue Lys-121 forms a Glycyl lysine isopeptide (Lys-Gly) (interchain with G-Cter in ubiquitin); alternate linkage.

It belongs to the histone H2B family. In terms of assembly, the nucleosome is a histone octamer containing two molecules each of H2A, H2B, H3 and H4 assembled in one H3-H4 heterotetramer and two H2A-H2B heterodimers. The octamer wraps approximately 147 bp of DNA. Monoubiquitination at Lys-35 (H2BK34Ub) by the MSL1/MSL2 dimer is required for histone H3 'Lys-4' (H3K4me) and 'Lys-79' (H3K79me) methylation and transcription activation at specific gene loci, such as HOXA9 and MEIS1 loci. Similarly, monoubiquitination at Lys-121 (H2BK120Ub) by the RNF20/40 complex gives a specific tag for epigenetic transcriptional activation and is also prerequisite for histone H3 'Lys-4' and 'Lys-79' methylation. It also functions cooperatively with the FACT dimer to stimulate elongation by RNA polymerase II. H2BK120Ub also acts as a regulator of mRNA splicing: deubiquitination by USP49 is required for efficient cotranscriptional splicing of a large set of exons. Post-translationally, phosphorylated on Ser-15 (H2BS14ph) by STK4/MST1 during apoptosis; which facilitates apoptotic chromatin condensation. Also phosphorylated on Ser-15 in response to DNA double strand breaks (DSBs), and in correlation with somatic hypermutation and immunoglobulin class-switch recombination. Phosphorylation at Ser-37 (H2BS36ph) by AMPK in response to stress promotes transcription. In terms of processing, glcNAcylation at Ser-113 promotes monoubiquitination of Lys-121. It fluctuates in response to extracellular glucose, and associates with transcribed genes. ADP-ribosylated by PARP1 or PARP2 on Ser-7 (H2BS6ADPr) in response to DNA damage. H2BS6ADPr promotes recruitment of CHD1L. Poly ADP-ribosylation on Glu-36 (H2BE35ADPr) by PARP1 regulates adipogenesis: it inhibits phosphorylation at Ser-37 (H2BS36ph), thereby blocking expression of pro-adipogenetic genes. Post-translationally, crotonylation (Kcr) is specifically present in male germ cells and marks testis-specific genes in post-meiotic cells, including X-linked genes that escape sex chromosome inactivation in haploid cells. Crotonylation marks active promoters and enhancers and confers resistance to transcriptional repressors. It is also associated with post-meiotically activated genes on autosomes. In terms of processing, hydroxybutyrylation of histones is induced by starvation. Lactylated in macrophages by EP300/P300 by using lactoyl-CoA directly derived from endogenous or exogenous lactate, leading to stimulates gene transcription.

It is found in the nucleus. Its subcellular location is the chromosome. Core component of nucleosome. Nucleosomes wrap and compact DNA into chromatin, limiting DNA accessibility to the cellular machineries which require DNA as a template. Histones thereby play a central role in transcription regulation, DNA repair, DNA replication and chromosomal stability. DNA accessibility is regulated via a complex set of post-translational modifications of histones, also called histone code, and nucleosome remodeling. The protein is Histone H2B type 2-B of Mus musculus (Mouse).